A 134-amino-acid polypeptide reads, in one-letter code: kinetoplast-associated protein 3 (134 aa).

Positions 1-10 are excised as a propeptide; that stretch reads MLRRSPTLLR. Residues 106 to 124 show a composition bias toward low complexity; the sequence is PKAPKAAKSASSKVKTAAK. Residues 106-134 form a disordered region; it reads PKAPKAAKSASSKVKTAAKTAKKTTAARK. Over residues 125-134 the composition is skewed to basic residues; sequence TAKKTTAARK.

It belongs to the KAP family. In terms of assembly, associates with the kinetoplast DNA network.

It is found in the mitochondrion matrix. It localises to the kinetoplast. Functionally, histone H1-like DNA-binding protein involved in the organization and segregation of kinetoplast DNA (kDNA). The mitochondrial DNA of kinetoplastid protozoa consists of about 5,000 minicircles and 20 to 30 maxicircles. These circular DNAs are held together by catenation into a highly organized compact disk structure referred to as a kinetoplast DNA (kDNA) network. Binds preferentially to a specific fragment of minicircle DNA and is able to compact kDNA networks through DNA charge neutralization and condensation. The polypeptide is kinetoplast-associated protein 3 (KAP3) (Crithidia fasciculata).